The primary structure comprises 563 residues: Benzaldehyde lyase (563 aa).

This sequence belongs to the TPP enzyme family. Requires a metal cation as cofactor. Thiamine diphosphate serves as cofactor.

It carries out the reaction benzoin = 2 benzaldehyde. In terms of biological role, cleavage of benzoin-anisoin acyloin linkage. The sequence is that of Benzaldehyde lyase (bznB) from Pseudomonas fluorescens.